We begin with the raw amino-acid sequence, 1245 residues long: Trafficking protein particle complex II-specific subunit 130 homolog (1245 aa).

Disordered stretches follow at residues G488–P524 and H884–V903. 2 stretches are compositionally biased toward low complexity: residues A495 to N507 and T888 to T898.

It belongs to the TMEM1 family. As to quaternary structure, part of the multisubunit TRAPP (transport protein particle) II complex composed of BET3, BET5, TRS20, TRS23, TRS31, TRS33, TRS65, TRS85, TRS120 and TRS130.

The protein resides in the golgi apparatus. Its subcellular location is the trans-Golgi network. It localises to the early endosome. In terms of biological role, specific subunit of the TRAPP II complex, a highly conserved vesicle tethering complex that is required for the proper transport of proteins in post-Golgi trafficking pathways to the growing cell plate in mitotic active cells. The chain is Trafficking protein particle complex II-specific subunit 130 homolog from Oryza sativa subsp. japonica (Rice).